A 218-amino-acid chain; its full sequence is Pyridoxine/pyridoxamine 5'-phosphate oxidase (218 aa).

Residues 14 to 17 and Lys72 each bind substrate; that span reads RREY. FMN contacts are provided by residues 67 to 72, 82 to 83, Arg88, Lys89, and Gln111; these read RIVLLK and YT. The substrate site is built by Tyr129, Arg133, and Ser137. Residues 146–147 and Trp191 each bind FMN; that span reads QS. 197 to 199 lines the substrate pocket; it reads RLH. Arg201 provides a ligand contact to FMN.

This sequence belongs to the pyridoxamine 5'-phosphate oxidase family. Homodimer. Requires FMN as cofactor.

It carries out the reaction pyridoxamine 5'-phosphate + O2 + H2O = pyridoxal 5'-phosphate + H2O2 + NH4(+). The enzyme catalyses pyridoxine 5'-phosphate + O2 = pyridoxal 5'-phosphate + H2O2. The protein operates within cofactor metabolism; pyridoxal 5'-phosphate salvage; pyridoxal 5'-phosphate from pyridoxamine 5'-phosphate: step 1/1. Its pathway is cofactor metabolism; pyridoxal 5'-phosphate salvage; pyridoxal 5'-phosphate from pyridoxine 5'-phosphate: step 1/1. Catalyzes the oxidation of either pyridoxine 5'-phosphate (PNP) or pyridoxamine 5'-phosphate (PMP) into pyridoxal 5'-phosphate (PLP). In Escherichia coli O127:H6 (strain E2348/69 / EPEC), this protein is Pyridoxine/pyridoxamine 5'-phosphate oxidase.